A 133-amino-acid chain; its full sequence is Nickel-responsive regulator (133 aa).

Residues His76, His87, His89, and Cys95 each coordinate Ni(2+).

Belongs to the transcriptional regulatory CopG/NikR family. In terms of assembly, homotetramer. Requires Ni(2+) as cofactor.

Its function is as follows. Transcriptional repressor of the nikABCDE operon. Is active in the presence of excessive concentrations of intracellular nickel. This chain is Nickel-responsive regulator, found in Salmonella choleraesuis (strain SC-B67).